Consider the following 67-residue polypeptide: Large ribosomal subunit protein uL30 (67 aa).

It belongs to the universal ribosomal protein uL30 family. Part of the 50S ribosomal subunit.

This Thermotoga neapolitana (strain ATCC 49049 / DSM 4359 / NBRC 107923 / NS-E) protein is Large ribosomal subunit protein uL30.